The chain runs to 321 residues: Olfactory receptor 52P1 (321 aa).

The Extracellular segment spans residues 1–27; the sequence is MESPNHTDVDPSVFFLLGIPGLEQFHL. Asn5 is a glycosylation site (N-linked (GlcNAc...) asparagine). The chain crosses the membrane as a helical span at residues 28–48; that stretch reads WLSLPVCGLGTATIVGNITIL. Over 49-56 the chain is Cytoplasmic; sequence VVVATEPV. The helical transmembrane segment at 57 to 77 threads the bilayer; that stretch reads LHKPVYLFLCMLSTIDLAASV. The Extracellular portion of the chain corresponds to 78–101; the sequence is STVPKLLAIFWCGAGHISASACLA. An intrachain disulfide couples Cys99 to Cys191. A helical membrane pass occupies residues 102–122; sequence QMFFIHAFCMMESTVLLAMAF. The Cytoplasmic portion of the chain corresponds to 123-141; it reads DRYVAICHPLRYATILTDT. A helical membrane pass occupies residues 142-162; sequence IIAHIGVAAVVRGSLLMLPCP. The Extracellular portion of the chain corresponds to 163-198; sequence FLIGRLNFCQSHVILHTYCEHMAVVKLACGDTRPNR. The helical transmembrane segment at 199-219 threads the bilayer; the sequence is VYGLTAALLVIGVDLFCIGLS. At 220 to 239 the chain is on the cytoplasmic side; it reads YALSAQAVLRLSSHEARSKA. Residues 240–260 traverse the membrane as a helical segment; that stretch reads LGTCGSHVCVILISYTPALFS. Over 261–275 the chain is Extracellular; sequence FFTHRFGHHVPVHIH. A helical membrane pass occupies residues 276-296; it reads ILLANVYLLLPPALNPVVYGV. The Cytoplasmic segment spans residues 297 to 315; that stretch reads KTKQIRKRVVRVFQSGQGM.

Belongs to the G-protein coupled receptor 1 family.

It is found in the cell membrane. Odorant receptor. The protein is Olfactory receptor 52P1 of Homo sapiens (Human).